The chain runs to 326 residues: BTB/POZ domain-containing protein At1g21780 (326 aa).

Residues 161–228 enclose the BTB domain; the sequence is TDVIIHTADG…LYGNITQEEF (68 aa).

In terms of assembly, homodimer. Interacts with CUL3A and CUL3B.

The protein operates within protein modification; protein ubiquitination. In terms of biological role, may act as a substrate-specific adapter of an E3 ubiquitin-protein ligase complex (CUL3-RBX1-BTB) which mediates the ubiquitination and subsequent proteasomal degradation of target proteins. The chain is BTB/POZ domain-containing protein At1g21780 from Arabidopsis thaliana (Mouse-ear cress).